A 62-amino-acid chain; its full sequence is SPbeta prophage-derived uncharacterized protein YonU (62 aa).

Positions 1 to 32 form a coiled coil; the sequence is MEKKFLDAIQQLTKELEMLKKDIDSIKEATVR.

This is SPbeta prophage-derived uncharacterized protein YonU (yonU) from Bacillus subtilis (strain 168).